Here is a 494-residue protein sequence, read N- to C-terminus: Cytochrome P450 2A10 (494 aa).

The residue at position 379 (Lys379) is an N6-acetyllysine. Residue Cys439 participates in heme binding.

The protein belongs to the cytochrome P450 family. Heme serves as cofactor. As to expression, expressed in liver and lung as well as in nasal tissues.

The protein resides in the endoplasmic reticulum membrane. It localises to the microsome membrane. The enzyme catalyses an organic molecule + reduced [NADPH--hemoprotein reductase] + O2 = an alcohol + oxidized [NADPH--hemoprotein reductase] + H2O + H(+). Functionally, catalyzes the oxygenation of a variety of substrates, including ethanol and procarcinogens such as N-nitrosodiethylamine and phenacetin. Exhibits a high coumarin 7-hydroxylase activity. Converts also testosterone to androstenedione. The chain is Cytochrome P450 2A10 (CYP2A10) from Oryctolagus cuniculus (Rabbit).